Here is a 3130-residue protein sequence, read N- to C-terminus: Reticulocyte-binding protein homolog 2a (3130 aa).

The first 24 residues, 1-24 (MKTTLFCSISFCNIIFFFLELSHE), serve as a signal peptide directing secretion. Over 25-3066 (HFVGQSSNTH…FSRSKNLSVA (3042 aa)) the chain is Extracellular. Residues Asn-43, Asn-105, Asn-123, and Asn-159 are each glycosylated (N-linked (GlcNAc...) asparagine). LRR repeat units follow at residues 182 to 206 (FTTS…EKFN), 300 to 323 (VMNN…LYLN), and 419 to 443 (ISKL…IFNI). The segment at 446–557 (KKYETYVDMK…SLNNYIEKTD (112 aa)) is erythrocyte binding domain (EBD). The stretch at 490-517 (KANLDSEVVKLQIKINEKSNELDNAISQ) forms a coiled coil. N-linked (GlcNAc...) asparagine glycosylation is found at Asn-575, Asn-579, Asn-635, Asn-675, Asn-724, and Asn-745. An LRR 4 repeat occupies 659-683 (LNSLNLININDFINEKNISQEKVSY). Residues 757–778 (LSHLLSLKENIIKKLLNHIEQN) form an LRR 5 repeat. Asn-781 carries N-linked (GlcNAc...) asparagine glycosylation. The stretch at 801-824 (KEEIESLEVYKHTIGNIQKEYILH) is one LRR 6 repeat. Residues Asn-837 and Asn-994 are each glycosylated (N-linked (GlcNAc...) asparagine). The LRR 7 repeat unit spans residues 1116–1139 (LTKLKSIHFNIDKEKYKNPKSQEN). An N-linked (GlcNAc...) asparagine glycan is attached at Asn-1166. Positions 1173 to 1185 (VNADNEKKKQKEK) are enriched in basic and acidic residues. The interval 1173-1195 (VNADNEKKKQKEKEEDDEQTHYS) is disordered. The stretch at 1305–1328 (FDKLKDLYENINKLTNESNGLKSD) is one LRR 8 repeat. 2 N-linked (GlcNAc...) asparagine glycosylation sites follow: Asn-1320 and Asn-1332. One copy of the LRR 9 repeat lies at 1336 to 1362 (VDKLKEINLQVFSNLGNIIKYVEKLEN). Asn-1398 and Asn-1409 each carry an N-linked (GlcNAc...) asparagine glycan. The LRR 10 repeat unit spans residues 1438–1461 (DDNIKSLVLKKEEISEKRKQVNKY). Asn-1513 carries N-linked (GlcNAc...) asparagine glycosylation. 2 LRR repeats span residues 1536–1561 (IIKI…KYEK) and 1628–1652 (SNLL…DYMN). N-linked (GlcNAc...) asparagine glycosylation is found at Asn-1705, Asn-1742, and Asn-1785. LRR repeat units follow at residues 1795–1818 (MTEI…AQTE) and 1890–1913 (LDSL…TNKE). Positions 1805 to 1842 (YNEIKEIKEVAQTEYDKLNKKVDELKNYLNNIKEQEGH) form a coiled coil. N-linked (GlcNAc...) asparagine glycans are attached at residues Asn-1900, Asn-1927, and Asn-1971. LRR repeat units follow at residues 2014-2041 (IQKL…LYDL) and 2052-2076 (ENDI…QYNF). N-linked (GlcNAc...) asparagine glycosylation is present at Asn-2113. An LRR 17 repeat occupies 2126–2152 (LDELEKSLTLSSNEMEIKTIVQNSYNS). Asn-2212, Asn-2268, Asn-2346, Asn-2421, Asn-2456, Asn-2473, Asn-2484, Asn-2537, and Asn-2550 each carry an N-linked (GlcNAc...) asparagine glycan. LRR repeat units follow at residues 2345-2368 (INET…INDK) and 2409-2434 (NVEL…TFIK). Residues 2522–2545 (LFQMEEMLLNINNIMNETKRISNT) form an LRR 20 repeat. 2 LRR repeats span residues 2572–2599 (IDKL…AKRK) and 2650–2671 (LNEL…KLIL). Positions 2661–2874 (IKDLGDEKLI…KIELAEREQH (214 aa)) form a coiled coil. Residues 2680–2753 (RERLEKAKQE…QERLQKEEEL (74 aa)) are disordered. LRR repeat units follow at residues 2915–2936 (LKHL…NDEV) and 2937–2959 (IKDN…LYLN). 3 N-linked (GlcNAc...) asparagine glycosylation sites follow: Asn-2940, Asn-2986, and Asn-3015. The tract at residues 3021–3056 (ITSKEKKDETESTKRSGTDHTNSSESTTDDNTNDRN) is disordered. Residues 3023–3038 (SKEKKDETESTKRSGT) show a composition bias toward basic and acidic residues. Positions 3039–3050 (DHTNSSESTTDD) are enriched in low complexity. Asn-3042, Asn-3056, and Asn-3062 each carry an N-linked (GlcNAc...) asparagine glycan. Residues 3067–3087 (IYTAGSVALCVLIFSSIGLLL) form a helical membrane-spanning segment. The Cytoplasmic portion of the chain corresponds to 3088–3130 (IKTNSGDNNSNEINEAFEPNDDVLFKEKDEIIEITFNDNDSTI).

As to quaternary structure, forms a heterodimer composed of the 285 kDa and the 85 kDa forms. Post-translationally, proteolytically processed into multiple fragments following schizont rupture. In the mature schizont stage prior to merozoite release, full length RH2b is processed post-Golgi into C-terminal 285 kDa and N-terminal 85 kDa forms. During merozoite invasion of host erythrocytes, further processing occurs generating a 140 kDa C-terminal form. At the same time, the C-terminal transmembrane region is probably cleaved, probably by a rhomboid protease, to shed all the different processed protein forms from the membrane leaving a transmembrane 7 kDa form on the merozoite surface.

The protein localises to the cell membrane. Its subcellular location is the cytoplasmic vesicle. The protein resides in the secretory vesicle. It localises to the rhoptry. It is found in the secreted. The protein localises to the cell junction. Its subcellular location is the tight junction. Functionally, during the asexual blood stage, binds to a chymotrypsin sensitive, neuraminidase and trypsin resistant receptor on the surface of the host erythrocyte. Despite its binding capacity, appears to be dispensable for merozoite invasion of host erythrocytes. Its function is as follows. During the asexual blood stage, binds to a trypsin-resistant and chymotrypsin and neuraminidase sensitive receptor on the surface of the host erythrocyte. This chain is Reticulocyte-binding protein homolog 2a, found in Plasmodium falciparum (isolate 3D7).